Consider the following 111-residue polypeptide: Entry-fusion complex protein OPG086 (111 aa).

A helical; Signal-anchor transmembrane segment spans residues 1–21 (MASLLYFILFLLFVCISYYFT). Topologically, residues 22–111 (YYPTNKLQAA…TLLPILLLSK (90 aa)) are virion surface.

The protein belongs to the orthopoxvirus OPG086 family. Interacts with OPG099/L5. Component of the entry fusion complex (EFC) composed of OPG053, OPG076, OPG086, OPG094, OPG095, OPG099, OPG107, OPG143, OPG104, OPG147 and OPG155. Except for OPG095 and OPG053, each of the EFC proteins is required for assembly or stability of the complex. Unglycosylated because produced in viral factories instead of the classic ER -Golgi route.

The protein resides in the virion membrane. Its function is as follows. Component of the entry fusion complex (EFC), which consists of 11 proteins. During cell infection, this complex mediates entry of the virion core into the host cytoplasm by a two-step mechanism consisting of lipid mixing of the viral and cellular membranes and subsequent pore formation. This chain is Entry-fusion complex protein OPG086 (OPG086), found in Variola virus (isolate Human/India/Ind3/1967) (VARV).